Consider the following 394-residue polypeptide: Elongation factor Tu 2 (394 aa).

The tr-type G domain occupies 10–204 (KPHVNVGTIG…ALDSYIPEPE (195 aa)). The segment at 19 to 26 (GHVDHGKT) is G1. 19–26 (GHVDHGKT) is a binding site for GTP. Residue Thr26 coordinates Mg(2+). A G2 region spans residues 60–64 (GITIS). Positions 81–84 (DCPG) are G3. GTP-binding positions include 81–85 (DCPGH) and 136–139 (NKCD). The segment at 136–139 (NKCD) is G4. The segment at 174 to 176 (SAL) is G5.

This sequence belongs to the TRAFAC class translation factor GTPase superfamily. Classic translation factor GTPase family. EF-Tu/EF-1A subfamily. Monomer.

It is found in the cytoplasm. The enzyme catalyses GTP + H2O = GDP + phosphate + H(+). GTP hydrolase that promotes the GTP-dependent binding of aminoacyl-tRNA to the A-site of ribosomes during protein biosynthesis. In Pseudoalteromonas translucida (strain TAC 125), this protein is Elongation factor Tu 2.